The sequence spans 353 residues: Photosystem II D2 protein (353 aa).

An N-acetylthreonine modification is found at threonine 2. Threonine 2 bears the Phosphothreonine mark. A helical membrane pass occupies residues 41 to 61; that stretch reads CAYFALGGWFTGTTFVTSWYT. Residue histidine 118 participates in chlorophyll a binding. The chain crosses the membrane as a helical span at residues 125 to 141; sequence GFMLRQFELARSVQLRP. Glutamine 130 and asparagine 143 together coordinate pheophytin a. The helical transmembrane segment at 153–166 threads the bilayer; it reads VFVSVFLIYPLGQS. Histidine 198 is a chlorophyll a binding site. A helical transmembrane segment spans residues 208–228; sequence AALLCAIHGATVENTLFEDGD. Histidine 215 and phenylalanine 262 together coordinate a plastoquinone. Histidine 215 lines the Fe cation pocket. Histidine 269 contacts Fe cation. The chain crosses the membrane as a helical span at residues 279–295; sequence GLWMSAIGVVGLALNLR.

This sequence belongs to the reaction center PufL/M/PsbA/D family. PSII is composed of 1 copy each of membrane proteins PsbA, PsbB, PsbC, PsbD, PsbE, PsbF, PsbH, PsbI, PsbJ, PsbK, PsbL, PsbM, PsbT, PsbX, PsbY, PsbZ, Psb30/Ycf12, at least 3 peripheral proteins of the oxygen-evolving complex and a large number of cofactors. It forms dimeric complexes. It depends on The D1/D2 heterodimer binds P680, chlorophylls that are the primary electron donor of PSII, and subsequent electron acceptors. It shares a non-heme iron and each subunit binds pheophytin, quinone, additional chlorophylls, carotenoids and lipids. There is also a Cl(-1) ion associated with D1 and D2, which is required for oxygen evolution. The PSII complex binds additional chlorophylls, carotenoids and specific lipids. as a cofactor.

It is found in the plastid. It localises to the chloroplast thylakoid membrane. The enzyme catalyses 2 a plastoquinone + 4 hnu + 2 H2O = 2 a plastoquinol + O2. Photosystem II (PSII) is a light-driven water:plastoquinone oxidoreductase that uses light energy to abstract electrons from H(2)O, generating O(2) and a proton gradient subsequently used for ATP formation. It consists of a core antenna complex that captures photons, and an electron transfer chain that converts photonic excitation into a charge separation. The D1/D2 (PsbA/PsbD) reaction center heterodimer binds P680, the primary electron donor of PSII as well as several subsequent electron acceptors. D2 is needed for assembly of a stable PSII complex. This is Photosystem II D2 protein from Cryptomeria japonica (Japanese cedar).